Here is a 359-residue protein sequence, read N- to C-terminus: FKRAVEGQHNYLCAGRNDCIIDKIRRKNCPACRVRKCLQAGMNLGARKSKKPGKLKGVNEDSTPTKEGGQTCPGSGGGYLSSGEKELSTSPTNALVPHGPGGGLVTPYLPPSICSVLELIEPEVVFAGYDNTQPDTTDHLLSSLNQLAGKQMIRVVKWAKVLPGFRGLPIEDQITLIQYSWMCLSSFSLSWRSYKHTNGQMLYFAPDLVFNEDRMQQSAMYDLCLGMRQVSQEFVRLQLTYQEFLSMKVLLLLSTVPKEGLKNQAAFEEMRVNYIKELRRSVGKAPTTLDRRGNRSSQLTKLLDAMHDLGGELLDFCFYTFRESQALKVEFPEMLVEIISDQIPKVESGNTHTLYFHKK.

The nuclear receptor DNA-binding region spans 1 to 49; the sequence is FKRAVEGQHNYLCAGRNDCIIDKIRRKNCPACRVRKCLQAGMNLGARKS. Residues Cys-13, Cys-19, Cys-29, and Cys-32 each coordinate Zn(2+). The segment at 13–37 adopts an NR C4-type zinc-finger fold; the sequence is CAGRNDCIIDKIRRKNCPACRVRKC. The interval 48–96 is disordered; the sequence is KSKKPGKLKGVNEDSTPTKEGGQTCPGSGGGYLSSGEKELSTSPTNALV. Residues 50 to 107 form a hinge region; it reads KKPGKLKGVNEDSTPTKEGGQTCPGSGGGYLSSGEKELSTSPTNALVPHGPGGGLVTP. The region spanning 108–339 is the NR LBD domain; it reads YLPPSICSVL…EFPEMLVEII (232 aa). 2 residues coordinate 21-hydroxyprogesterone: Asn-145 and Gln-151. Aldosterone-binding residues include Asn-145 and Gln-151. Positions 145 and 151 each coordinate progesterone. The important for coactivator binding stretch occupies residues 157–160; sequence KWAK. Arg-192 and Thr-320 together coordinate 21-hydroxyprogesterone. Arg-192 and Thr-320 together coordinate aldosterone. Positions 192 and 320 each coordinate progesterone.

Belongs to the nuclear hormone receptor family. NR3 subfamily.

Its subcellular location is the cytoplasm. The protein resides in the nucleus. Functionally, receptor for both mineralocorticoids (MC) such as cortisol. Binds to mineralocorticoid response elements (MRE) and transactivates target genes. The effect of MC is to increase ion and water transport and thus raise extracellular fluid volume and blood pressure and lower potassium levels. The polypeptide is Mineralocorticoid receptor (nr3c2) (Oncorhynchus mykiss (Rainbow trout)).